The chain runs to 240 residues: Uridylate kinase (240 aa).

13–16 serves as a coordination point for ATP; it reads KLSG. An involved in allosteric activation by GTP region spans residues 21–26; sequence GDDGFG. UMP is bound at residue Gly-55. ATP-binding residues include Gly-56 and Arg-60. UMP is bound by residues Asp-75 and 136 to 143; that span reads IGNPYFST. Positions 164, 170, and 173 each coordinate ATP.

Belongs to the UMP kinase family. As to quaternary structure, homohexamer.

Its subcellular location is the cytoplasm. The enzyme catalyses UMP + ATP = UDP + ADP. It functions in the pathway pyrimidine metabolism; CTP biosynthesis via de novo pathway; UDP from UMP (UMPK route): step 1/1. Its activity is regulated as follows. Allosterically activated by GTP. Inhibited by UTP. Its function is as follows. Catalyzes the reversible phosphorylation of UMP to UDP. This Staphylococcus saprophyticus subsp. saprophyticus (strain ATCC 15305 / DSM 20229 / NCIMB 8711 / NCTC 7292 / S-41) protein is Uridylate kinase.